A 401-amino-acid polypeptide reads, in one-letter code: Nicotinate phosphoribosyltransferase (401 aa).

His221 carries the phosphohistidine; by autocatalysis modification.

This sequence belongs to the NAPRTase family. Post-translationally, transiently phosphorylated on a His residue during the reaction cycle. Phosphorylation strongly increases the affinity for substrates and increases the rate of nicotinate D-ribonucleotide production. Dephosphorylation regenerates the low-affinity form of the enzyme, leading to product release.

It catalyses the reaction nicotinate + 5-phospho-alpha-D-ribose 1-diphosphate + ATP + H2O = nicotinate beta-D-ribonucleotide + ADP + phosphate + diphosphate. It participates in cofactor biosynthesis; NAD(+) biosynthesis; nicotinate D-ribonucleotide from nicotinate: step 1/1. Its function is as follows. Catalyzes the synthesis of beta-nicotinate D-ribonucleotide from nicotinate and 5-phospho-D-ribose 1-phosphate at the expense of ATP. This Edwardsiella ictaluri (strain 93-146) protein is Nicotinate phosphoribosyltransferase.